A 602-amino-acid polypeptide reads, in one-letter code: GTP-binding protein 1 (602 aa).

A Phosphoserine modification is found at serine 2. Residues 91-322 (FLEVRVAVVG…LNLLSPRTSY (232 aa)) form the tr-type G domain. A G1 region spans residues 100–107 (GNVDAGKS). GTP is bound at residue 100-107 (GNVDAGKS). Residues 139–143 (GRTSS) form a G2 region. The tract at residues 185-188 (DLAG) is G3. GTP is bound by residues 185–189 (DLAGH) and 241–244 (TKID). The interval 241 to 244 (TKID) is G4. Residues 299-301 (SNV) are G5. Positions 506 to 528 (LLQTTNNSPMNSKPQQIKMQSTK) are enriched in polar residues. The interval 506 to 602 (LLQTTNNSPM…GACVTPASGC (97 aa)) is disordered. Serine 513 bears the Phosphoserine mark. The span at 579–589 (GRRRGGQRYKV) shows a compositional bias: basic residues.

The protein belongs to the TRAFAC class translation factor GTPase superfamily. Classic translation factor GTPase family. GTPBP1 subfamily. In terms of assembly, interacts with EXOSC2/RRP4, EXOSC3/RRP40, EXOSC5/RRP46, HNRNPD, HNRNPR and SYNCRIP. Identified in a complex with AANAT mRNA, but does not bind mRNA by itself.

The protein localises to the cytoplasm. Functionally, promotes degradation of target mRNA species. Plays a role in the regulation of circadian mRNA stability. Binds GTP and has GTPase activity. The sequence is that of GTP-binding protein 1 (GTPBP1) from Pongo abelii (Sumatran orangutan).